A 579-amino-acid polypeptide reads, in one-letter code: Cytochrome P450 monooxygenase prx9 (579 aa).

A helical transmembrane segment spans residues 6 to 25 (LPLGSFVGTTLLLFILYKLV). N-linked (GlcNAc...) asparagine glycosylation is found at Asn194, Asn292, and Asn390. Cys512 is a binding site for heme.

Belongs to the cytochrome P450 family. The cofactor is heme.

It localises to the membrane. It functions in the pathway sesquiterpene biosynthesis. In terms of biological role, cytochrome P450 monooxygenase; part of the gene cluster that mediates the biosynthesis of PR-toxin, a bicyclic sesquiterpene belonging to the eremophilane class and acting as a mycotoxin. The first step of the pathway is catalyzed by the aristolochene synthase which performs the cyclization of trans,trans-farnesyl diphosphate (FPP) to the bicyclic sesquiterpene aristolochene. Following the formation of aristolochene, the non-oxygenated aristolochene is converted to the trioxygenated intermediate eremofortin B, via 7-epi-neopetasone. This conversion appears to involve three enzymes, a hydroxysterol oxidase-like enzyme, the quinone-oxidase prx3 that forms the quinone-type-structure in the bicyclic nucleus of aristolochene with the C8-oxo group and the C-3 hydroxyl group, and the P450 monooxygenase prx9 that introduces the epoxide at the double bond between carbons 1 and 2. No monoxy or dioxy-intermediates have been reported to be released to the broth, so these three early oxidative reactions may be coupled together. Eremofortin B is further oxidized by another P450 monooxygenase, that introduces a second epoxide between carbons 7 and 11 prior to acetylation to eremofortin A by the acetyltransferase prx11. The second epoxidation may be performed by a second P450 monooxygenase. After the acetylation step, eremofortin A is converted to eremofortin C and then to PR-toxin. First the conversion of eremofortin A to eremofortin C proceeds by oxidation of the side chain of the molecule at C-12 and is catalyzed by the short-chain oxidoreductase prx1. The cytochrome P450 monooxygenase prx8 also plays a role in this step. The primary alcohol formed at C-12 is finally oxidized by the short-chain alcohol dehydrogenase prx4 that forms PR-toxin. This chain is Cytochrome P450 monooxygenase prx9, found in Penicillium rubens (strain ATCC 28089 / DSM 1075 / NRRL 1951 / Wisconsin 54-1255) (Penicillium chrysogenum).